A 738-amino-acid chain; its full sequence is Isocitrate dehydrogenase [NADP] (738 aa).

NADP(+) contacts are provided by Asn83 and Ser85. Residues Ser130, Asn133, Arg137, Arg143, and Lys253 each coordinate D-threo-isocitrate. An NADP(+)-binding site is contributed by Asn133. Residue Asp346 participates in Mg(2+) binding. Residues Tyr416 and Arg543 each coordinate D-threo-isocitrate. The Mg(2+) site is built by Asp544 and Asp548. The NADP(+) site is built by Gly580, His585, Arg596, Asp598, and Arg645.

This sequence belongs to the monomeric-type IDH family. Monomer. The cofactor is Mg(2+). It depends on Mn(2+) as a cofactor.

The protein localises to the cytoplasm. The catalysed reaction is D-threo-isocitrate + NADP(+) = 2-oxoglutarate + CO2 + NADPH. With respect to regulation, weakly inhibited by oxaloacetate, 2-oxoglutarate and citrate. Severely inhibited by oxaloacetate plus glyoxylate. Its function is as follows. Catalyzes the oxidative decarboxylation of isocitrate to 2-oxoglutarate and carbon dioxide with the concomitant reduction of NADP(+). Cannot use NAD(+). The polypeptide is Isocitrate dehydrogenase [NADP] (Corynebacterium glutamicum (strain ATCC 13032 / DSM 20300 / JCM 1318 / BCRC 11384 / CCUG 27702 / LMG 3730 / NBRC 12168 / NCIMB 10025 / NRRL B-2784 / 534)).